Consider the following 300-residue polypeptide: Glutamyl-Q tRNA(Asp) synthetase (300 aa).

L-glutamate-binding positions include 14-18 (RFAPT) and Glu50. The 'HIGH' region signature appears at 17-27 (PTPSGFLHFGS). Positions 106, 108, 120, and 124 each coordinate Zn(2+). Positions 177 and 195 each coordinate L-glutamate. The 'KMSKS' region signature appears at 233-237 (KLGKS). Lys236 contributes to the ATP binding site.

This sequence belongs to the class-I aminoacyl-tRNA synthetase family. GluQ subfamily. The cofactor is Zn(2+).

Functionally, catalyzes the tRNA-independent activation of glutamate in presence of ATP and the subsequent transfer of glutamate onto a tRNA(Asp). Glutamate is transferred on the 2-amino-5-(4,5-dihydroxy-2-cyclopenten-1-yl) moiety of the queuosine in the wobble position of the QUC anticodon. This is Glutamyl-Q tRNA(Asp) synthetase from Pseudomonas putida (strain ATCC 47054 / DSM 6125 / CFBP 8728 / NCIMB 11950 / KT2440).